We begin with the raw amino-acid sequence, 371 residues long: Isopentenyl-diphosphate delta-isomerase (371 aa).

Residue 9–10 coordinates substrate; that stretch reads RK. FMN is bound by residues Thr66, 67 to 69, Ser100, and Asn128; that span reads GMT. Position 100–102 (100–102) interacts with substrate; it reads SQR. A substrate-binding site is contributed by Gln167. Residue Glu168 participates in Mg(2+) binding. FMN is bound by residues Lys199, Ser224, Thr229, 278-280, and 299-300; these read GMR and AL.

The protein belongs to the IPP isomerase type 2 family. In terms of assembly, homooctamer. Dimer of tetramers. Requires FMN as cofactor. The cofactor is NADPH. Mg(2+) is required as a cofactor.

The protein localises to the cytoplasm. The enzyme catalyses isopentenyl diphosphate = dimethylallyl diphosphate. Involved in the biosynthesis of isoprenoids. Catalyzes the 1,3-allylic rearrangement of the homoallylic substrate isopentenyl (IPP) to its allylic isomer, dimethylallyl diphosphate (DMAPP). This is Isopentenyl-diphosphate delta-isomerase from Pyrococcus horikoshii (strain ATCC 700860 / DSM 12428 / JCM 9974 / NBRC 100139 / OT-3).